The following is a 149-amino-acid chain: Calmodulin-2 (149 aa).

Alanine 2 is subject to N-acetylalanine. EF-hand domains follow at residues 8 to 43 (EQIAEFKEAFSLFDKDGDGCITTKELGTVMRSLGQN), 44 to 79 (PTEAELQDMINEVDADGNGTIDFPEFLNLMAKKMKD), 81 to 116 (DSEEELKEAFRVFDKDQNGFISAAELRHVMTNLGEK), and 117 to 149 (LTDEEVDEMIREADVDGDGQINYEEFVKVMMAK). The Ca(2+) site is built by aspartate 21, aspartate 23, aspartate 25, cysteine 27, glutamate 32, aspartate 57, aspartate 59, asparagine 61, threonine 63, glutamate 68, aspartate 94, aspartate 96, asparagine 98, and glutamate 105. Position 116 is an N6,N6,N6-trimethyllysine (lysine 116). Aspartate 130, aspartate 132, aspartate 134, glutamine 136, and glutamate 141 together coordinate Ca(2+).

The protein belongs to the calmodulin family.

In terms of biological role, calmodulin mediates the control of a large number of enzymes, ion channels and other proteins by Ca(2+). Among the enzymes to be stimulated by the calmodulin-Ca(2+) complex are a number of protein kinases and phosphatases. This is Calmodulin-2 (CAM2) from Oryza sativa subsp. indica (Rice).